The following is a 336-amino-acid chain: MTEAQTACATTETPVAAPAAPRWRVADVIALYELPFNDLLFRAQQTHREHFDANAIQLSTLLSIKTGGCEEDCGYCSQSAHHDTGLKAEKLMEVDAVLAAARTAKENGATRFCMGAAWRNPKDRHIEPIKEMIRGVKDMGLETCVTLGMLEEHQAKALAEAGLDYYNHNLDTSPEFYGQIISTRTYQDRLDTLERVRDAGINVCCGGIIGMGESRRERAGLIAQLANMNPYPESVPINNLVAIEGTPLENAQALDPFEFVRTIAVARITMPKAMVRLSAGREQLDDAMQALCFLAGANSMFYGDVLLTTGNPRAEADRKLLARLGMSASEASQLSA.

The Radical SAM core domain occupies 54-281 (NAIQLSTLLS…KAMVRLSAGR (228 aa)). C69, C73, and C76 together coordinate [4Fe-4S] cluster. Residues C113, C144, C204, and R276 each contribute to the [2Fe-2S] cluster site.

It belongs to the radical SAM superfamily. Biotin synthase family. As to quaternary structure, homodimer. [4Fe-4S] cluster serves as cofactor. The cofactor is [2Fe-2S] cluster.

The enzyme catalyses (4R,5S)-dethiobiotin + (sulfur carrier)-SH + 2 reduced [2Fe-2S]-[ferredoxin] + 2 S-adenosyl-L-methionine = (sulfur carrier)-H + biotin + 2 5'-deoxyadenosine + 2 L-methionine + 2 oxidized [2Fe-2S]-[ferredoxin]. The protein operates within cofactor biosynthesis; biotin biosynthesis; biotin from 7,8-diaminononanoate: step 2/2. Its function is as follows. Catalyzes the conversion of dethiobiotin (DTB) to biotin by the insertion of a sulfur atom into dethiobiotin via a radical-based mechanism. The polypeptide is Biotin synthase (Burkholderia mallei (strain ATCC 23344)).